The following is a 202-amino-acid chain: Josephin-1 (202 aa).

Residues 1–22 are disordered; that stretch reads MSCVPWKGDKAKAESSDLPQAA. Ser15 carries the phosphoserine modification. Positions 23 to 202 constitute a Josephin domain; the sequence is PPQIYHEKQR…EAHQSWRADV (180 aa). Cys36 (nucleophile) is an active-site residue. His139 (proton acceptor) is an active-site residue.

In terms of assembly, interacts with beta-actin/ACTB. Post-translationally, monoubiquitinated. Ubiquitination activates deubiquitination activity in vitro. As to expression, widely expressed (at protein level).

The protein resides in the cell membrane. Its subcellular location is the cytoplasm. It carries out the reaction Thiol-dependent hydrolysis of ester, thioester, amide, peptide and isopeptide bonds formed by the C-terminal Gly of ubiquitin (a 76-residue protein attached to proteins as an intracellular targeting signal).. Its function is as follows. Deubiquitinates monoubiquitinated probes (in vitro). When ubiquitinated, cleaves 'Lys-63'-linked and 'Lys-48'-linked poly-ubiquitin chains (in vitro), hence may act as a deubiquitinating enzyme. May increase macropinocytosis and suppress clathrin- and caveolae-mediated endocytosis. May enhance membrane dynamics and cell motility independently of its catalytic activity. The polypeptide is Josephin-1 (Josd1) (Mus musculus (Mouse)).